Consider the following 293-residue polypeptide: Elongation factor Ts (293 aa).

The interval 80-83 (TDFV) is involved in Mg(2+) ion dislocation from EF-Tu.

It belongs to the EF-Ts family.

Its subcellular location is the cytoplasm. Functionally, associates with the EF-Tu.GDP complex and induces the exchange of GDP to GTP. It remains bound to the aminoacyl-tRNA.EF-Tu.GTP complex up to the GTP hydrolysis stage on the ribosome. The polypeptide is Elongation factor Ts (Burkholderia ambifaria (strain MC40-6)).